The sequence spans 237 residues: Sugar fermentation stimulation protein homolog (237 aa).

Belongs to the SfsA family.

The protein is Sugar fermentation stimulation protein homolog of Pseudomonas putida (strain ATCC 47054 / DSM 6125 / CFBP 8728 / NCIMB 11950 / KT2440).